Reading from the N-terminus, the 512-residue chain is Cobyric acid synthase (512 aa).

The region spanning 251-451 is the GATase cobBQ-type domain; it reads ALDITVIRLP…IHGLFDSANF (201 aa). Cysteine 332 (nucleophile) is an active-site residue. Histidine 443 is an active-site residue.

This sequence belongs to the CobB/CobQ family. CobQ subfamily.

The protein operates within cofactor biosynthesis; adenosylcobalamin biosynthesis. In terms of biological role, catalyzes amidations at positions B, D, E, and G on adenosylcobyrinic A,C-diamide. NH(2) groups are provided by glutamine, and one molecule of ATP is hydrogenolyzed for each amidation. The sequence is that of Cobyric acid synthase from Photorhabdus laumondii subsp. laumondii (strain DSM 15139 / CIP 105565 / TT01) (Photorhabdus luminescens subsp. laumondii).